A 507-amino-acid chain; its full sequence is Histidine ammonia-lyase (507 aa).

Residues 141–143 (ASG) constitute a cross-link (5-imidazolinone (Ala-Gly)). 2,3-didehydroalanine (Ser) is present on Ser142.

This sequence belongs to the PAL/histidase family. Post-translationally, contains an active site 4-methylidene-imidazol-5-one (MIO), which is formed autocatalytically by cyclization and dehydration of residues Ala-Ser-Gly.

It is found in the cytoplasm. The enzyme catalyses L-histidine = trans-urocanate + NH4(+). It participates in amino-acid degradation; L-histidine degradation into L-glutamate; N-formimidoyl-L-glutamate from L-histidine: step 1/3. The protein is Histidine ammonia-lyase of Burkholderia ambifaria (strain ATCC BAA-244 / DSM 16087 / CCUG 44356 / LMG 19182 / AMMD) (Burkholderia cepacia (strain AMMD)).